The following is a 761-amino-acid chain: Semaphorin-4A (761 aa).

A signal peptide spans 1 to 32 (MALPALGLDPWSLLGLFLFQLLQLLLPTTTAG). Over 33–683 (GGGQGPMPRV…LAAQQSYWPH (651 aa)) the chain is Extracellular. The region spanning 36 to 494 (QGPMPRVRYY…FSGGVWRVPR (459 aa)) is the Sema domain. A disulfide bridge connects residues C113 and C124. N-linked (GlcNAc...) asparagine glycans are attached at residues N120 and N135. Cystine bridges form between C142-C151, C269-C379, and C293-C339. An N-linked (GlcNAc...) asparagine glycan is attached at N496. One can recognise a PSI domain in the interval 496-548 (NCSVYESCVDCVLARDPHCAWDPESRTCCLLSAPNLNSWKQDMERGNPEWACA). 3 disulfides stabilise this stretch: C497/C514, C506/C523, and C580/C624. The region spanning 573 to 631 (NSILELPCPHLSALASYYWSHGPAAVPEASSTVYNGSLLLIVQDGVGGLYQCWATENGF) is the Ig-like C2-type domain. N-linked (GlcNAc...) asparagine glycosylation is present at N607. Residues 684–704 (FVTVTVLFALVLSGALIILVA) traverse the membrane as a helical segment. Topologically, residues 705–761 (SPLRALRARGKVQGCETLRPGEKAPLSREQHLQSPKECRTSASDVDADNNCLGTEVA) are cytoplasmic. The tract at residues 722–749 (LRPGEKAPLSREQHLQSPKECRTSASDV) is disordered. Residues 723 to 743 (RPGEKAPLSREQHLQSPKECR) are compositionally biased toward basic and acidic residues.

It belongs to the semaphorin family. As to quaternary structure, interacts with PLXNB1, PLXNB2, PLXNB3, PLXND1 and TIMD2.

The protein resides in the cell membrane. In terms of biological role, cell surface receptor for PLXNB1, PLXNB2, PLXNB3 and PLXND1 that plays an important role in cell-cell signaling. Regulates glutamatergic and GABAergic synapse development. Promotes the development of inhibitory synapses in a PLXNB1-dependent manner and promotes the development of excitatory synapses in a PLXNB2-dependent manner. Plays a role in priming antigen-specific T-cells, promotes differentiation of Th1 T-helper cells, and thereby contributes to adaptive immunity. Promotes phosphorylation of TIMD2. Inhibits angiogenesis. Promotes axon growth cone collapse. Inhibits axonal extension by providing local signals to specify territories inaccessible for growing axons. The chain is Semaphorin-4A (SEMA4A) from Homo sapiens (Human).